We begin with the raw amino-acid sequence, 171 residues long: Large ribosomal subunit protein uL24 (171 aa).

The large ribosomal subunit protein uL24 stretch occupies residues 1–124; that stretch reads MNIKTGDTVV…AKPAKTKAEK (124 aa). The segment at 108 to 171 is disordered; the sequence is GQTLDKAAKP…SVQKKGASGK (64 aa). The tract at residues 125–171 is unknown; it reads VEKAATSSTDKPAKVTKAAKEAKPVKAVKSQKVEKNTSVQKKGASGK.

The protein belongs to the universal ribosomal protein uL24 family. As to quaternary structure, part of the 50S ribosomal subunit.

In terms of biological role, one of two assembly initiator proteins, it binds directly to the 5'-end of the 23S rRNA, where it nucleates assembly of the 50S subunit. Functionally, one of the proteins that surrounds the polypeptide exit tunnel on the outside of the subunit. The sequence is that of Large ribosomal subunit protein uL24 from Acholeplasma laidlawii (strain PG-8A).